Here is a 452-residue protein sequence, read N- to C-terminus: tRNA modification GTPase MnmE (452 aa).

3 residues coordinate (6S)-5-formyl-5,6,7,8-tetrahydrofolate: Arg24, Glu81, and Arg120. One can recognise a TrmE-type G domain in the interval 216 to 373; the sequence is GIKTVIVGAP…LFGAIGRWAD (158 aa). Residues 226-231, 245-251, and 270-273 contribute to the GTP site; these read NVGKSS, SAEPGTT, and DTAG. The Mg(2+) site is built by Ser230 and Thr251. Lys452 lines the (6S)-5-formyl-5,6,7,8-tetrahydrofolate pocket.

Belongs to the TRAFAC class TrmE-Era-EngA-EngB-Septin-like GTPase superfamily. TrmE GTPase family. Homodimer. Heterotetramer of two MnmE and two MnmG subunits. The cofactor is K(+).

Its subcellular location is the cytoplasm. Exhibits a very high intrinsic GTPase hydrolysis rate. Involved in the addition of a carboxymethylaminomethyl (cmnm) group at the wobble position (U34) of certain tRNAs, forming tRNA-cmnm(5)s(2)U34. The protein is tRNA modification GTPase MnmE of Opitutus terrae (strain DSM 11246 / JCM 15787 / PB90-1).